The sequence spans 252 residues: Tabinhibitin 9 (252 aa).

The N-terminal stretch at Met-1–Ser-23 is a signal peptide. Residues Arg-32–Asp-34 carry the Cell attachment site motif. In terms of domain architecture, SCP spans Tyr-63–Phe-207.

The protein belongs to the CRISP family. In terms of tissue distribution, expressed in salivary glands.

Its subcellular location is the secreted. Inhibits platelet aggregation induced by all agonists tested (ADP, arachidonic acid, the thromboxane A2 analog U46619, thrombin, and snake venom snaclecs (TMVA that activates platelet through GPIB, and stejnulxin that specifically acts through GPVI (GP6))). May act by competing with fibrinogen for binding to glycoprotein IIb/IIIa (ITGA2B/ITGB3). The chain is Tabinhibitin 9 from Tabanus yao (Horsefly).